The following is a 137-amino-acid chain: Ribonuclease P protein component (137 aa).

It belongs to the RnpA family. As to quaternary structure, consists of a catalytic RNA component (M1 or rnpB) and a protein subunit.

It catalyses the reaction Endonucleolytic cleavage of RNA, removing 5'-extranucleotides from tRNA precursor.. In terms of biological role, RNaseP catalyzes the removal of the 5'-leader sequence from pre-tRNA to produce the mature 5'-terminus. It can also cleave other RNA substrates such as 4.5S RNA. The protein component plays an auxiliary but essential role in vivo by binding to the 5'-leader sequence and broadening the substrate specificity of the ribozyme. This is Ribonuclease P protein component from Porphyromonas gingivalis (strain ATCC 33277 / DSM 20709 / CIP 103683 / JCM 12257 / NCTC 11834 / 2561).